The sequence spans 520 residues: GMP synthase [glutamine-hydrolyzing] (520 aa).

Residues 9–202 form the Glutamine amidotransferase type-1 domain; it reads SVLIVDFGSQ…IHNIAGIKGD (194 aa). Cys86 (nucleophile) is an active-site residue. Catalysis depends on residues His176 and Glu178. Residues 203-395 enclose the GMPS ATP-PPase domain; it reads WSMSAYRQKA…LGLPDSFIGR (193 aa). 230 to 236 contacts ATP; sequence SGGVDSS.

As to quaternary structure, homodimer.

It carries out the reaction XMP + L-glutamine + ATP + H2O = GMP + L-glutamate + AMP + diphosphate + 2 H(+). The protein operates within purine metabolism; GMP biosynthesis; GMP from XMP (L-Gln route): step 1/1. Functionally, catalyzes the synthesis of GMP from XMP. This is GMP synthase [glutamine-hydrolyzing] from Rhizobium etli (strain CIAT 652).